Consider the following 511-residue polypeptide: Lariat debranching enzyme (511 aa).

Residues C52, H54, D83, and N128 each coordinate a divalent metal cation. The interval 168–198 (SGIYSHGDVEFSHYERPAFAERDVKSAYHVR) is lariat recognition loop. 3 residues coordinate a divalent metal cation: H226, H278, and H280. Positions 473 to 511 (EDDFIIDRGHGSEEPEAKKSRLEEEKKKKKKKIENLKTL) are disordered. Positions 477–498 (IIDRGHGSEEPEAKKSRLEEEK) are enriched in basic and acidic residues.

This sequence belongs to the lariat debranching enzyme family. Fe(2+) is required as a cofactor. It depends on Zn(2+) as a cofactor. Mn(2+) serves as cofactor.

The protein localises to the nucleus. With respect to regulation, active in presence of diverse metals including Fe(2+), Zn(2+), Mn(2+). Binds two metal cations in two adjacent alpha and beta metal-binding pockets. Its function is as follows. Cleaves the 2'-5' phosphodiester linkage at the branch point of lariat intron pre-mRNAs after splicing and converts them into linear molecules that are subsequently degraded. It thereby facilitates ribonucleotide turnover. In Caenorhabditis briggsae, this protein is Lariat debranching enzyme (dbr-1).